Here is a 170-residue protein sequence, read N- to C-terminus: Phosphopantetheine adenylyltransferase (170 aa).

T18 is a substrate binding site. ATP contacts are provided by residues 18–19 and H26; that span reads TF. 3 residues coordinate substrate: K50, L84, and R98. Residues 99–101, E109, and 134–140 contribute to the ATP site; these read GLR and WIYISSS.

This sequence belongs to the bacterial CoaD family. Homohexamer. The cofactor is Mg(2+).

Its subcellular location is the cytoplasm. It carries out the reaction (R)-4'-phosphopantetheine + ATP + H(+) = 3'-dephospho-CoA + diphosphate. It functions in the pathway cofactor biosynthesis; coenzyme A biosynthesis; CoA from (R)-pantothenate: step 4/5. Reversibly transfers an adenylyl group from ATP to 4'-phosphopantetheine, yielding dephospho-CoA (dPCoA) and pyrophosphate. This chain is Phosphopantetheine adenylyltransferase, found in Desulfotalea psychrophila (strain LSv54 / DSM 12343).